The chain runs to 325 residues: ATP synthase subunit gamma, mitochondrial (325 aa).

Residues 1 to 42 constitute a mitochondrion transit peptide; the sequence is MAMAVFRREGRRLLPSIAARPIAAIRSPLSSDQEEGLLGVRS.

The protein belongs to the ATPase gamma chain family. In terms of assembly, F-type ATPases have 2 components, CF(1) - the catalytic core - and CF(0) - the membrane proton channel. CF(1) has five subunits: alpha(3), beta(3), gamma(1), delta(1), epsilon(1). CF(0) has three main subunits: a, b and c.

It is found in the mitochondrion. Its subcellular location is the mitochondrion inner membrane. In terms of biological role, mitochondrial membrane ATP synthase (F(1)F(0) ATP synthase or Complex V) produces ATP from ADP in the presence of a proton gradient across the membrane which is generated by electron transport complexes of the respiratory chain. F-type ATPases consist of two structural domains, F(1) - containing the extramembraneous catalytic core, and F(0) - containing the membrane proton channel, linked together by a central stalk and a peripheral stalk. During catalysis, ATP synthesis in the catalytic domain of F(1) is coupled via a rotary mechanism of the central stalk subunits to proton translocation. Part of the complex F(1) domain and the central stalk which is part of the complex rotary element. The gamma subunit protrudes into the catalytic domain formed of alpha(3)beta(3). Rotation of the central stalk against the surrounding alpha(3)beta(3) subunits leads to hydrolysis of ATP in three separate catalytic sites on the beta subunits. This Arabidopsis thaliana (Mouse-ear cress) protein is ATP synthase subunit gamma, mitochondrial (ATPC).